The chain runs to 210 residues: Tetraspanin-31 (210 aa).

Residues Met1–Ala12 are Cytoplasmic-facing. The chain crosses the membrane as a helical span at residues Leu13–Trp33. At Gly34–His44 the chain is on the extracellular side. A helical membrane pass occupies residues Ile45–Val65. Residues Gly66–Gln72 lie on the Cytoplasmic side of the membrane. A helical membrane pass occupies residues Val73–Ser93. Over Cys94–Lys173 the chain is Extracellular. Residues Asn100, Asn109, Asn117, and Asn134 are each glycosylated (N-linked (GlcNAc...) asparagine). A helical membrane pass occupies residues Ile174–Met194. Over Arg195–Leu210 the chain is Cytoplasmic.

Belongs to the tetraspanin (TM4SF) family.

The protein localises to the membrane. The polypeptide is Tetraspanin-31 (TSPAN31) (Homo sapiens (Human)).